The primary structure comprises 88 residues: Putative membrane protein insertion efficiency factor (88 aa).

This sequence belongs to the UPF0161 family.

It localises to the cell inner membrane. Functionally, could be involved in insertion of integral membrane proteins into the membrane. The polypeptide is Putative membrane protein insertion efficiency factor (Koribacter versatilis (strain Ellin345)).